We begin with the raw amino-acid sequence, 169 residues long: Putative phosphoesterase SERP0604 (169 aa).

The active-site Proton donor is the His-34. 2 consecutive short sequence motifs (HXTX) follow at residues 34–37 (HITI) and 115–118 (HFTI). The active-site Proton acceptor is the His-115.

Belongs to the 2H phosphoesterase superfamily. YjcG family.

The protein is Putative phosphoesterase SERP0604 of Staphylococcus epidermidis (strain ATCC 35984 / DSM 28319 / BCRC 17069 / CCUG 31568 / BM 3577 / RP62A).